The sequence spans 159 residues: MADS-box transcription factor 23 (159 aa).

The 61-residue stretch at 1 to 61 (MGRGKIEIKR…SRLYDFASSS (61 aa)) folds into the MADS-box domain. One can recognise a K-box domain in the interval 86–159 (AKLWQQEAAS…QELSRKVVTT (74 aa)).

As to expression, expressed in seedling roots and developing seeds.

The protein localises to the nucleus. Its function is as follows. Probable transcription factor. The protein is MADS-box transcription factor 23 (MADS23) of Oryza sativa subsp. japonica (Rice).